A 459-amino-acid polypeptide reads, in one-letter code: UDP-N-acetylmuramoylalanine--D-glutamate ligase (459 aa).

Residue 119–125 (GTNGKTT) participates in ATP binding.

Belongs to the MurCDEF family.

The protein localises to the cytoplasm. The enzyme catalyses UDP-N-acetyl-alpha-D-muramoyl-L-alanine + D-glutamate + ATP = UDP-N-acetyl-alpha-D-muramoyl-L-alanyl-D-glutamate + ADP + phosphate + H(+). It functions in the pathway cell wall biogenesis; peptidoglycan biosynthesis. Cell wall formation. Catalyzes the addition of glutamate to the nucleotide precursor UDP-N-acetylmuramoyl-L-alanine (UMA). This chain is UDP-N-acetylmuramoylalanine--D-glutamate ligase, found in Lactiplantibacillus plantarum (strain ATCC BAA-793 / NCIMB 8826 / WCFS1) (Lactobacillus plantarum).